We begin with the raw amino-acid sequence, 222 residues long: Vesicle-associated membrane protein 724 (222 aa).

Residues 1 to 197 are Cytoplasmic-facing; it reads MGQESFIYSF…LWYQNMKIKL (197 aa). Positions 10 to 115 constitute a Longin domain; sequence FVARGTMILA…SLNKEFGPVM (106 aa). The v-SNARE coiled-coil homology domain occupies 131–191; sequence KLIKVKAQVS…TQVRRKLWYQ (61 aa). The helical; Anchor for type IV membrane protein transmembrane segment at 198–218 threads the bilayer; it reads VVLGILLLLVLIIWISVCHGF. Residues 219–222 are Vesicular-facing; that stretch reads NCTD.

Belongs to the synaptobrevin family. As to expression, expressed in flowers, leaves, stems and roots.

Its subcellular location is the cell membrane. The protein localises to the early endosome membrane. In terms of biological role, involved in the targeting and/or fusion of transport vesicles to their target membrane. The chain is Vesicle-associated membrane protein 724 from Arabidopsis thaliana (Mouse-ear cress).